The chain runs to 72 residues: DNA-directed RNA polymerase subunit omega (72 aa).

The protein belongs to the RNA polymerase subunit omega family. As to quaternary structure, the RNAP catalytic core consists of 2 alpha, 1 beta, 1 beta' and 1 omega subunit. When a sigma factor is associated with the core the holoenzyme is formed, which can initiate transcription.

The enzyme catalyses RNA(n) + a ribonucleoside 5'-triphosphate = RNA(n+1) + diphosphate. In terms of biological role, promotes RNA polymerase assembly. Latches the N- and C-terminal regions of the beta' subunit thereby facilitating its interaction with the beta and alpha subunits. The polypeptide is DNA-directed RNA polymerase subunit omega (Clostridium acetobutylicum (strain ATCC 824 / DSM 792 / JCM 1419 / IAM 19013 / LMG 5710 / NBRC 13948 / NRRL B-527 / VKM B-1787 / 2291 / W)).